Reading from the N-terminus, the 505-residue chain is ATP synthase subunit alpha, cyanelle (505 aa).

170–177 (GDRQTGKT) provides a ligand contact to ATP.

The protein belongs to the ATPase alpha/beta chains family. In terms of assembly, F-type ATPases have 2 components, CF(1) - the catalytic core - and CF(0) - the membrane proton channel. CF(1) has five subunits: alpha(3), beta(3), gamma(1), delta(1), epsilon(1). CF(0) has four main subunits: a, b, b' and c.

Its subcellular location is the plastid. The protein resides in the cyanelle thylakoid membrane. It carries out the reaction ATP + H2O + 4 H(+)(in) = ADP + phosphate + 5 H(+)(out). Its function is as follows. Produces ATP from ADP in the presence of a proton gradient across the membrane. The alpha chain is a regulatory subunit. The sequence is that of ATP synthase subunit alpha, cyanelle from Cyanophora paradoxa.